Reading from the N-terminus, the 523-residue chain is MPSVMEKPSAGSGILSRSRAKTAPNGGQPHSEDDSSEEEHSHDSMIRVGTNYQAVIPECKPESPARYSNKELKGMLVWSPNHCVSDAKLDKYIAMAKEKHGYNIEQALGMLLWHKHDVEKSLADLANFTPFPDEWTVEDKVLFEQAFGFHGKCFQRIQQMLPDKLIPSLVKYYYSWKKTRSRTSVMDRQARRLGGRKDKEDSDELEEGRGAVSEGEPDTGDPKREPLPSRPLNARPGPGKKEIQVSQYRHHPLRTRRRPPKGMYLSPEGLTAVSGSPDLANLTLRGLDSQLISLKRQVQSMKQTNSSLRQALEGGIDPLRPPEANTKFNSRWTTDEQLLAVQAIRRYGKDFGAIAEVIGNKTLTQVKTFFVSYRRRFNLEEVLQEWEAEQDGAPTAPVPVEEARRGAPVPATALEEDDEVQITSVSTSVPRSVPPAPPPPPPPTSLSQPPPLLRPPLPTAPTLLRQPPPLQQGRFLQPRLAPNQPPPPLIRPALAASRHSARPGPQPPPTLVGAQLEPPAPSL.

The interval 1-43 is disordered; sequence MPSVMEKPSAGSGILSRSRAKTAPNGGQPHSEDDSSEEEHSHD. The segment covering 30 to 43 has biased composition (basic and acidic residues); it reads HSEDDSSEEEHSHD. A phosphoserine mark is found at Ser31, Ser35, Ser36, and Ser63. An ELM2 domain is found at 44–129; it reads SMIRVGTNYQ…KSLADLANFT (86 aa). A Glycyl lysine isopeptide (Lys-Gly) (interchain with G-Cter in SUMO2) cross-link involves residue Lys88. An SANT 1 domain is found at 130 to 181; it reads PFPDEWTVEDKVLFEQAFGFHGKCFQRIQQMLPDKLIPSLVKYYYSWKKTRS. A disordered region spans residues 185–265; it reads VMDRQARRLG…RRRPPKGMYL (81 aa). At Ser202 the chain carries Phosphoserine. The segment covering 248–260 has biased composition (basic residues); sequence YRHHPLRTRRRPP. The stretch at 283 to 314 forms a coiled coil; sequence TLRGLDSQLISLKRQVQSMKQTNSSLRQALEG. Residues 327–378 form the SANT 2 domain; that stretch reads KFNSRWTTDEQLLAVQAIRRYGKDFGAIAEVIGNKTLTQVKTFFVSYRRRFN. The interval 387-523 is disordered; it reads EAEQDGAPTA…AQLEPPAPSL (137 aa). Positions 432–459 are enriched in pro residues; the sequence is SVPPAPPPPPPPTSLSQPPPLLRPPLPT. Positions 460 to 482 are enriched in low complexity; it reads APTLLRQPPPLQQGRFLQPRLAP. At Arg479 the chain carries Asymmetric dimethylarginine.

It belongs to the CoREST family.

The protein localises to the nucleus. Functionally, may act as a component of a corepressor complex that represses transcription. This chain is REST corepressor 2 (Rcor2), found in Rattus norvegicus (Rat).